A 223-amino-acid chain; its full sequence is Cytidylate kinase (223 aa).

An ATP-binding site is contributed by 12–20; the sequence is GPAGSGKST.

This sequence belongs to the cytidylate kinase family. Type 1 subfamily.

It localises to the cytoplasm. It catalyses the reaction CMP + ATP = CDP + ADP. It carries out the reaction dCMP + ATP = dCDP + ADP. The polypeptide is Cytidylate kinase (Aster yellows witches'-broom phytoplasma (strain AYWB)).